The chain runs to 467 residues: UDP-N-acetylmuramate--L-alanine ligase (467 aa).

An ATP-binding site is contributed by 114-120; sequence GTHGKTT.

Belongs to the MurCDEF family.

It localises to the cytoplasm. The enzyme catalyses UDP-N-acetyl-alpha-D-muramate + L-alanine + ATP = UDP-N-acetyl-alpha-D-muramoyl-L-alanine + ADP + phosphate + H(+). It participates in cell wall biogenesis; peptidoglycan biosynthesis. Its function is as follows. Cell wall formation. The polypeptide is UDP-N-acetylmuramate--L-alanine ligase (Bradyrhizobium diazoefficiens (strain JCM 10833 / BCRC 13528 / IAM 13628 / NBRC 14792 / USDA 110)).